The chain runs to 840 residues: Leucine--tRNA ligase (840 aa).

Residues 44–55 (PYPSANGLHVGH) carry the 'HIGH' region motif. Residues 617-621 (KMSKS) carry the 'KMSKS' region motif. Lys-620 contacts ATP.

This sequence belongs to the class-I aminoacyl-tRNA synthetase family.

Its subcellular location is the cytoplasm. The enzyme catalyses tRNA(Leu) + L-leucine + ATP = L-leucyl-tRNA(Leu) + AMP + diphosphate. In Borreliella afzelii (strain PKo) (Borrelia afzelii), this protein is Leucine--tRNA ligase.